A 361-amino-acid chain; its full sequence is Peroxidase A (361 aa).

This sequence belongs to the peroxidase family. Post-translationally, partially N-glycosylated.

Its subcellular location is the secreted. It catalyses the reaction 2 a phenolic donor + H2O2 = 2 a phenolic radical donor + 2 H2O. The polypeptide is Peroxidase A (Aloe vera (Aloe)).